Here is a 400-residue protein sequence, read N- to C-terminus: Probable vacuolar protease A (400 aa).

A signal peptide spans 1-18 (MKGSLLLAGATLLGCTSA). Residues 19 to 72 (KLHSLKLKKVSLKEQLEHADIDVQIKSLGQKYMGIRPEQHEQQMFKEQTPIEVE) constitute a propeptide, activation peptide. One can recognise a Peptidase A1 domain in the interval 87 to 397 (YFSEISIGTP…DLGKGTVGLA (311 aa)). Residue Asp-105 is part of the active site. Residues Cys-118 and Cys-123 are joined by a disulfide bond. Residue Asn-140 is glycosylated (N-linked (GlcNAc...) asparagine). The active site involves Asp-289. An intrachain disulfide couples Cys-323 to Cys-356. N-linked (GlcNAc...) asparagine glycosylation is present at Asn-340.

It belongs to the peptidase A1 family.

The protein resides in the vacuole lumen. The protein localises to the secreted. It catalyses the reaction Hydrolysis of proteins with broad specificity for peptide bonds. Cleaves -Leu-Leu-|-Val-Tyr- bond in a synthetic substrate. Does not act on esters of Tyr or Arg.. Functionally, vacuolar aspartic endopeptidase which is probably also secreted and contributes to virulence. This is Probable vacuolar protease A (PEP2) from Arthroderma benhamiae (strain ATCC MYA-4681 / CBS 112371) (Trichophyton mentagrophytes).